A 295-amino-acid chain; its full sequence is Pyridoxal 5'-phosphate synthase subunit PdxS (295 aa).

D-ribose 5-phosphate is bound at residue Asp-25. The active-site Schiff-base intermediate with D-ribose 5-phosphate is Lys-82. Residue Gly-154 coordinates D-ribose 5-phosphate. Arg-166 contributes to the D-glyceraldehyde 3-phosphate binding site. Residues Gly-215 and 236 to 237 contribute to the D-ribose 5-phosphate site; that span reads GS.

Belongs to the PdxS/SNZ family. In the presence of PdxT, forms a dodecamer of heterodimers.

The catalysed reaction is aldehydo-D-ribose 5-phosphate + D-glyceraldehyde 3-phosphate + L-glutamine = pyridoxal 5'-phosphate + L-glutamate + phosphate + 3 H2O + H(+). Its pathway is cofactor biosynthesis; pyridoxal 5'-phosphate biosynthesis. Functionally, catalyzes the formation of pyridoxal 5'-phosphate from ribose 5-phosphate (RBP), glyceraldehyde 3-phosphate (G3P) and ammonia. The ammonia is provided by the PdxT subunit. Can also use ribulose 5-phosphate and dihydroxyacetone phosphate as substrates, resulting from enzyme-catalyzed isomerization of RBP and G3P, respectively. The sequence is that of Pyridoxal 5'-phosphate synthase subunit PdxS from Dictyoglomus turgidum (strain DSM 6724 / Z-1310).